A 311-amino-acid polypeptide reads, in one-letter code: DNA-directed RNA polymerase subunit alpha (311 aa).

The segment at methionine 1–lysine 227 is alpha N-terminal domain (alpha-NTD). The segment at isoleucine 242–lysine 311 is alpha C-terminal domain (alpha-CTD).

Belongs to the RNA polymerase alpha chain family. As to quaternary structure, in plastids the minimal PEP RNA polymerase catalytic core is composed of four subunits: alpha, beta, beta', and beta''. When a (nuclear-encoded) sigma factor is associated with the core the holoenzyme is formed, which can initiate transcription.

The protein resides in the plastid. It localises to the chloroplast. It catalyses the reaction RNA(n) + a ribonucleoside 5'-triphosphate = RNA(n+1) + diphosphate. In terms of biological role, DNA-dependent RNA polymerase catalyzes the transcription of DNA into RNA using the four ribonucleoside triphosphates as substrates. In Phaeodactylum tricornutum (strain CCAP 1055/1), this protein is DNA-directed RNA polymerase subunit alpha.